The sequence spans 605 residues: IQ domain-containing protein IQM2 (605 aa).

In terms of domain architecture, IQ spans 105-134 (KHEAAIKLQKVYKSFRTRRKLADCAVLVEQ). Positions 408 to 505 (QDKVDPSGEE…EEGETKESEV (98 aa)) are disordered. The span at 425–440 (SISRKQSDLETPEKME) shows a compositional bias: basic and acidic residues. Acidic residues predominate over residues 462 to 480 (DYDSGDDEEEEEEMFELEQ). Residues 481–490 (ESMPSEQSSP) show a composition bias toward low complexity. Residues 491-505 (RGEEKEEGETKESEV) show a composition bias toward basic and acidic residues.

Expressed in rosette and cauline leaves, stems, flowers and siliques, and at lower levels in roots.

The protein localises to the cytoplasm. It is found in the nucleus. Its function is as follows. May be involved in biotic and abiotic stress responses. This Arabidopsis thaliana (Mouse-ear cress) protein is IQ domain-containing protein IQM2.